The primary structure comprises 247 residues: Adenosylcobinamide-GDP ribazoletransferase (247 aa).

5 consecutive transmembrane segments (helical) span residues 34–54 (IITF…VFMV), 57–77 (AWCG…LMTG), 113–133 (GGLA…ELAL), 138–158 (ILAS…LLMY), and 194–214 (VLLL…AIFI).

The protein belongs to the CobS family. It depends on Mg(2+) as a cofactor.

Its subcellular location is the cell inner membrane. The catalysed reaction is alpha-ribazole + adenosylcob(III)inamide-GDP = adenosylcob(III)alamin + GMP + H(+). It carries out the reaction alpha-ribazole 5'-phosphate + adenosylcob(III)inamide-GDP = adenosylcob(III)alamin 5'-phosphate + GMP + H(+). It functions in the pathway cofactor biosynthesis; adenosylcobalamin biosynthesis; adenosylcobalamin from cob(II)yrinate a,c-diamide: step 7/7. Its function is as follows. Joins adenosylcobinamide-GDP and alpha-ribazole to generate adenosylcobalamin (Ado-cobalamin). Also synthesizes adenosylcobalamin 5'-phosphate from adenosylcobinamide-GDP and alpha-ribazole 5'-phosphate. The polypeptide is Adenosylcobinamide-GDP ribazoletransferase (Shigella flexneri).